Here is a 567-residue protein sequence, read N- to C-terminus: DNA-binding protein REPIN1 (567 aa).

Residues 17 to 52 (PRLLSGPSQESPQTLGKESRGLRQQGTSVAQSGAQA) are disordered. Positions 22 to 50 (GPSQESPQTLGKESRGLRQQGTSVAQSGA) are enriched in polar residues. Serine 27 bears the Phosphoserine mark. Threonine 30 is modified (phosphothreonine). At lysine 33 the chain carries N6-acetyllysine. The C2H2-type 1; atypical zinc finger occupies 57 to 79 (HRCAHCRRHFPGWVALWLHTRRC). 7 C2H2-type zinc fingers span residues 85 to 107 (LPCPECGRRFRHAPFLALHRQVH), 116 to 138 (FACHLCGQSFRGWVALVLHLRAH), 145 to 168 (IACPKCERRFWRRKQLRAHLRRCH), 177 to 199 (FICGNCGRSFAQWDQLVAHKRVH), 236 to 258 (FQCACCGKRFRHKPNLIAHRRVH), 264 to 286 (HQCPECGKRFTNKPYLTSHRRIH), and 292 to 314 (YPCKECGRRFRHKPNLLSHSKIH). An N6-acetyllysine modification is found at lysine 276. Residues 305-315 (PNLLSHSKIHK) show a composition bias toward basic residues. The segment at 305–372 (PNLLSHSKIH…HPQDPIEAPP (68 aa)) is disordered. Residues 345 to 362 (PAVPLKPAQEPPPGAPPE) show a composition bias toward pro residues. C2H2-type zinc fingers lie at residues 375 to 397 (YSCDDCGRSFRLERFLRAHQRQH), 403 to 425 (FTCAECGKNFGKKTHLVAHSRVH), 431 to 453 (FACEECGRRFSQGSHLAAHRRDH), 459 to 481 (FVCPDCGKAFRHKPYLAAHRRIH), 487 to 509 (YVCPDCGKAFSQKSNLVSHRRIH), 515 to 537 (YACPDCDRSFSQKSNLITHRKSH), and 543 to 565 (FCCAICGQTFDDEERLLAHQKKH).

As to quaternary structure, homodimers and homomultimers. Found in a complex with RIP60 and RIP100. In terms of tissue distribution, expressed in adipose tissue and bone tissue.

It is found in the nucleus. It localises to the cytoplasm. The protein resides in the cytosol. Functionally, sequence-specific double-stranded DNA-binding protein. Binds ATT-rich and T-rich DNA sequences and facilitates DNA bending. May regulate the expression of genes involved in cellular fatty acid import, including SCARB1/CD36, and genes involved in lipid droplet formation. May regulate the expression of LCN2, and thereby influence iron metabolism and apoptosis-related pathways. May regulate the expression of genes involved in glucose transport. The polypeptide is DNA-binding protein REPIN1 (REPIN1) (Homo sapiens (Human)).